The following is a 79-amino-acid chain: D-alanyl carrier protein (79 aa).

Residues M1–T76 form the Carrier domain. Residue S34 is modified to O-(pantetheine 4'-phosphoryl)serine.

It belongs to the DltC family. Post-translationally, 4'-phosphopantetheine is transferred from CoA to a specific serine of apo-DCP.

Its subcellular location is the cytoplasm. The protein operates within cell wall biogenesis; lipoteichoic acid biosynthesis. In terms of biological role, carrier protein involved in the D-alanylation of lipoteichoic acid (LTA). The loading of thioester-linked D-alanine onto DltC is catalyzed by D-alanine--D-alanyl carrier protein ligase DltA. The DltC-carried D-alanyl group is further transferred to cell membrane phosphatidylglycerol (PG) by forming an ester bond, probably catalyzed by DltD. D-alanylation of LTA plays an important role in modulating the properties of the cell wall in Gram-positive bacteria, influencing the net charge of the cell wall. This chain is D-alanyl carrier protein, found in Lactococcus lactis subsp. cremoris (strain SK11).